The primary structure comprises 466 residues: Asparagine--tRNA ligase (466 aa).

This sequence belongs to the class-II aminoacyl-tRNA synthetase family. As to quaternary structure, homodimer.

The protein localises to the cytoplasm. The enzyme catalyses tRNA(Asn) + L-asparagine + ATP = L-asparaginyl-tRNA(Asn) + AMP + diphosphate + H(+). This chain is Asparagine--tRNA ligase, found in Xylella fastidiosa (strain Temecula1 / ATCC 700964).